The sequence spans 478 residues: Isoeugenol monooxygenase (478 aa).

The Fe cation site is built by His-167, His-218, His-282, and His-471.

Belongs to the carotenoid oxygenase family. The cofactor is Fe(2+).

The catalysed reaction is (E)-isoeugenol + O2 = vanillin + acetaldehyde. Inhibited by Co(2+), Ni(2+) and Zn(2+), which may inhibit enzyme activity by replacing iron in the catalytic residues. Inhibited by incubation with high concentrations of the iron chelators 1,10-phenanthroline and Tiron. However, iron is not completely removed by the chelators, suggesting that iron is tightly bound to the enzyme. Functionally, involved in isoeugenol degradation. Catalyzes the oxidative cleavage of the side chain double-bond of isoeugenol to form vanillin and acetaldehyde. This is Isoeugenol monooxygenase from Pseudomonas nitroreducens.